Here is a 140-residue protein sequence, read N- to C-terminus: Large ribosomal subunit protein uL13 (140 aa).

Belongs to the universal ribosomal protein uL13 family. As to quaternary structure, part of the 50S ribosomal subunit.

Its function is as follows. This protein is one of the early assembly proteins of the 50S ribosomal subunit, although it is not seen to bind rRNA by itself. It is important during the early stages of 50S assembly. This is Large ribosomal subunit protein uL13 from Nautilia profundicola (strain ATCC BAA-1463 / DSM 18972 / AmH).